A 447-amino-acid polypeptide reads, in one-letter code: N-succinylarginine dihydrolase (447 aa).

Residues 19–28 (AGLSFGNEAS), asparagine 110, and 137–138 (HR) contribute to the substrate site. Glutamate 174 is a catalytic residue. Arginine 212 contacts substrate. Histidine 248 is a catalytic residue. Substrate contacts are provided by aspartate 250 and asparagine 359. Catalysis depends on cysteine 365, which acts as the Nucleophile.

It belongs to the succinylarginine dihydrolase family. Homodimer.

It catalyses the reaction N(2)-succinyl-L-arginine + 2 H2O + 2 H(+) = N(2)-succinyl-L-ornithine + 2 NH4(+) + CO2. Its pathway is amino-acid degradation; L-arginine degradation via AST pathway; L-glutamate and succinate from L-arginine: step 2/5. Its function is as follows. Catalyzes the hydrolysis of N(2)-succinylarginine into N(2)-succinylornithine, ammonia and CO(2). This chain is N-succinylarginine dihydrolase, found in Escherichia coli (strain K12 / MC4100 / BW2952).